We begin with the raw amino-acid sequence, 1059 residues long: Transmembrane protease serine 9 (1059 aa).

At 1 to 29 (MEPTVADVHLVPRTTKEVPALDAACCRAA) the chain is on the cytoplasmic side. A helical; Signal-anchor for type II membrane protein transmembrane segment spans residues 30–50 (SIGVVATSLVVLTLGVLLAFL). Residues 51-1059 (STQGFHVDHT…RGWIGQHIQE (1009 aa)) lie on the Extracellular side of the membrane. An LDL-receptor class A domain is found at 153–190 (RCPGNSFSCGNSQCVTKVNPECDDQEDCSDGSDEAHCE). Cystine bridges form between cysteine 154–cysteine 166, cysteine 161–cysteine 180, cysteine 174–cysteine 189, and cysteine 228–cysteine 244. The Peptidase S1 1 domain maps to 203–436 (IVGGMEASPG…LRDWILEATT (234 aa)). Active-site charge relay system residues include histidine 243 and aspartate 292. Disulfide bonds link cysteine 326/cysteine 393, cysteine 358/cysteine 372, and cysteine 383/cysteine 412. Serine 387 (charge relay system) is an active-site residue. The segment at 443-469 (APTMAPAPAAPSTAWPTSPESPVVSTP) is disordered. Residues 504–736 (VVGGFGAASG…LKGWILEIMS (233 aa)) enclose the Peptidase S1 2 domain. Residues cysteine 529 and cysteine 545 are joined by a disulfide bond. Catalysis depends on histidine 544, which acts as the Charge relay system. A glycan (N-linked (GlcNAc...) asparagine) is linked at asparagine 547. Aspartate 592 acts as the Charge relay system in catalysis. Cystine bridges form between cysteine 626-cysteine 693, cysteine 658-cysteine 672, and cysteine 683-cysteine 712. 2 N-linked (GlcNAc...) asparagine glycosylation sites follow: asparagine 638 and asparagine 663. Catalysis depends on serine 687, which acts as the Charge relay system. Positions 758-814 (TTAGLTVPGATPSRPTPGAASRVTGQPANSTLSAVSTTARGQTPFPDAPEATTHTQL) are disordered. A compositionally biased stretch (polar residues) spans 780–798 (VTGQPANSTLSAVSTTARG). N-linked (GlcNAc...) asparagine glycosylation is present at asparagine 786. The Peptidase S1 3 domain maps to 827-1058 (IVGGSAAGRG…VRGWIGQHIQ (232 aa)). 4 disulfides stabilise this stretch: cysteine 853-cysteine 869, cysteine 949-cysteine 1015, cysteine 980-cysteine 994, and cysteine 1005-cysteine 1034.

This sequence belongs to the peptidase S1 family. In terms of processing, proteolytically cleaved to generate 3 independent serine protease chains. The cleaved chains may remain attached to the membrane thanks to disulfide bonds. It is unclear whether cleavage always takes place. As to expression, expressed in fetal human tissues, such as kidney, liver, lung and brain, and in a variety of tumor cell lines. Weakly expressed in adult tissues including skeletal muscle, liver, placenta and heart.

It is found in the cell membrane. With respect to regulation, inhibited by serine protease inhibitors PMSF and 4-(2-aminoethyl)benzenesulfonyl fluoride, but not by EDTA. Its function is as follows. Serase-1 and serase-2 are serine proteases that hydrolyze the peptides N-t-Boc-Gln-Ala-Arg-AMC and N-t-Boc-Gln-Gly-Arg-AMC. In contrast, N-t-Boc-Ala-Phe-Lys-AMC and N-t-Boc-Ala-Pro-Ala-AMC are not significantly hydrolyzed. This chain is Transmembrane protease serine 9 (TMPRSS9), found in Homo sapiens (Human).